A 25-amino-acid chain; its full sequence is Cytochrome c oxidase subunit 1 (25 aa).

The protein belongs to the heme-copper respiratory oxidase family. Requires Cu(2+) as cofactor. Heme is required as a cofactor.

The protein resides in the cell inner membrane. It catalyses the reaction 4 Fe(II)-[cytochrome c] + O2 + 8 H(+)(in) = 4 Fe(III)-[cytochrome c] + 2 H2O + 4 H(+)(out). Its pathway is energy metabolism; oxidative phosphorylation. Functionally, subunit I and II form the functional core of the enzyme complex. Electrons originating in cytochrome c are transferred via heme a and Cu(A) to the binuclear center formed by heme a3 and Cu(B). This cytochrome c oxidase shows proton pump activity across the membrane in addition to the electron transfer. The chain is Cytochrome c oxidase subunit 1 (ctaD) from Paracoccus versutus (Thiobacillus versutus).